Reading from the N-terminus, the 401-residue chain is Anhydro-N-acetylmuramic acid kinase (401 aa).

An ATP-binding site is contributed by 25-32; that stretch reads GTSLDGLD.

The protein belongs to the anhydro-N-acetylmuramic acid kinase family.

The enzyme catalyses 1,6-anhydro-N-acetyl-beta-muramate + ATP + H2O = N-acetyl-D-muramate 6-phosphate + ADP + H(+). Its pathway is amino-sugar metabolism; 1,6-anhydro-N-acetylmuramate degradation. It participates in cell wall biogenesis; peptidoglycan recycling. Its function is as follows. Catalyzes the specific phosphorylation of 1,6-anhydro-N-acetylmuramic acid (anhMurNAc) with the simultaneous cleavage of the 1,6-anhydro ring, generating MurNAc-6-P. Is required for the utilization of anhMurNAc either imported from the medium or derived from its own cell wall murein, and thus plays a role in cell wall recycling. This Pseudoalteromonas translucida (strain TAC 125) protein is Anhydro-N-acetylmuramic acid kinase.